A 78-amino-acid chain; its full sequence is D-alanyl carrier protein (78 aa).

Residues 1–78 form the Carrier domain; that stretch reads MAFRENVLEI…MIITQLEALK (78 aa). Residue Ser-36 is modified to O-(pantetheine 4'-phosphoryl)serine.

It belongs to the DltC family. 4'-phosphopantetheine is transferred from CoA to a specific serine of apo-DCP.

The protein localises to the cytoplasm. It functions in the pathway cell wall biogenesis; lipoteichoic acid biosynthesis. Carrier protein involved in the D-alanylation of lipoteichoic acid (LTA). The loading of thioester-linked D-alanine onto DltC is catalyzed by D-alanine--D-alanyl carrier protein ligase DltA. The DltC-carried D-alanyl group is further transferred to cell membrane phosphatidylglycerol (PG) by forming an ester bond, probably catalyzed by DltD. D-alanylation of LTA plays an important role in modulating the properties of the cell wall in Gram-positive bacteria, influencing the net charge of the cell wall. The polypeptide is D-alanyl carrier protein (Listeria innocua serovar 6a (strain ATCC BAA-680 / CLIP 11262)).